The chain runs to 344 residues: N-acetyl-gamma-glutamyl-phosphate reductase (344 aa).

Cys149 is a catalytic residue.

It belongs to the NAGSA dehydrogenase family. Type 1 subfamily.

The protein resides in the cytoplasm. It catalyses the reaction N-acetyl-L-glutamate 5-semialdehyde + phosphate + NADP(+) = N-acetyl-L-glutamyl 5-phosphate + NADPH + H(+). Its pathway is amino-acid biosynthesis; L-arginine biosynthesis; N(2)-acetyl-L-ornithine from L-glutamate: step 3/4. Functionally, catalyzes the NADPH-dependent reduction of N-acetyl-5-glutamyl phosphate to yield N-acetyl-L-glutamate 5-semialdehyde. This chain is N-acetyl-gamma-glutamyl-phosphate reductase, found in Shouchella clausii (strain KSM-K16) (Alkalihalobacillus clausii).